We begin with the raw amino-acid sequence, 62 residues long: Large ribosomal subunit protein uL30 (62 aa).

The protein belongs to the universal ribosomal protein uL30 family. Part of the 50S ribosomal subunit.

This chain is Large ribosomal subunit protein uL30, found in Ruegeria pomeroyi (strain ATCC 700808 / DSM 15171 / DSS-3) (Silicibacter pomeroyi).